The primary structure comprises 214 residues: Riboflavin kinase (214 aa).

Positions 1–27 are disordered; it reads MRPDRPRDPVTGPDEGPESPYPIRMSG. Mg(2+)-binding residues include Thr44 and Asn46. Catalysis depends on Glu101, which acts as the Nucleophile.

Belongs to the flavokinase family. It depends on Zn(2+) as a cofactor. Requires Mg(2+) as cofactor.

It catalyses the reaction riboflavin + ATP = FMN + ADP + H(+). It participates in cofactor biosynthesis; FMN biosynthesis; FMN from riboflavin (ATP route): step 1/1. Functionally, catalyzes the phosphorylation of riboflavin (vitamin B2) to form flavin mononucleotide (FMN) coenzyme. The chain is Riboflavin kinase (fmn1) from Aspergillus niger (strain ATCC MYA-4892 / CBS 513.88 / FGSC A1513).